The sequence spans 152 residues: Deoxyuridine 5'-triphosphate nucleotidohydrolase (152 aa).

Substrate contacts are provided by residues 71 to 73, Asn-84, 88 to 90, and Met-98; these read RSG and LID.

The protein belongs to the dUTPase family. Mg(2+) serves as cofactor.

It carries out the reaction dUTP + H2O = dUMP + diphosphate + H(+). It functions in the pathway pyrimidine metabolism; dUMP biosynthesis; dUMP from dCTP (dUTP route): step 2/2. This enzyme is involved in nucleotide metabolism: it produces dUMP, the immediate precursor of thymidine nucleotides and it decreases the intracellular concentration of dUTP so that uracil cannot be incorporated into DNA. The sequence is that of Deoxyuridine 5'-triphosphate nucleotidohydrolase from Shewanella amazonensis (strain ATCC BAA-1098 / SB2B).